A 90-amino-acid chain; its full sequence is Probable Fe(2+)-trafficking protein (90 aa).

Belongs to the Fe(2+)-trafficking protein family.

Functionally, could be a mediator in iron transactions between iron acquisition and iron-requiring processes, such as synthesis and/or repair of Fe-S clusters in biosynthetic enzymes. This chain is Probable Fe(2+)-trafficking protein, found in Bordetella avium (strain 197N).